Here is a 625-residue protein sequence, read N- to C-terminus: 1-deoxy-D-xylulose-5-phosphate synthase (625 aa).

Residues H80 and 121–123 (GHS) contribute to the thiamine diphosphate site. D152 is a Mg(2+) binding site. Thiamine diphosphate-binding positions include 153–154 (GS), N181, Y290, and E371. N181 contacts Mg(2+).

This sequence belongs to the transketolase family. DXPS subfamily. In terms of assembly, homodimer. It depends on Mg(2+) as a cofactor. The cofactor is thiamine diphosphate.

The enzyme catalyses D-glyceraldehyde 3-phosphate + pyruvate + H(+) = 1-deoxy-D-xylulose 5-phosphate + CO2. It participates in metabolic intermediate biosynthesis; 1-deoxy-D-xylulose 5-phosphate biosynthesis; 1-deoxy-D-xylulose 5-phosphate from D-glyceraldehyde 3-phosphate and pyruvate: step 1/1. Its function is as follows. Catalyzes the acyloin condensation reaction between C atoms 2 and 3 of pyruvate and glyceraldehyde 3-phosphate to yield 1-deoxy-D-xylulose-5-phosphate (DXP). In Haemophilus influenzae (strain PittGG), this protein is 1-deoxy-D-xylulose-5-phosphate synthase.